Here is a 537-residue protein sequence, read N- to C-terminus: Synaptotagmin-2 (537 aa).

At 1–2 the chain is on the cytoplasmic side; the sequence is MG. A helical membrane pass occupies residues 3-23; that stretch reads IISTILGVIGFGFGTTIGIVI. Residues 24 to 537 are Lumenal-facing; the sequence is GYYLFIYFQS…QIELQWRNSS (514 aa). The region spanning 67 to 249 is the SMP-LTD domain; it reads DFDRIDWLNK…WPKTLNVQIM (183 aa). The interval 227–505 is phospholipid binding; it reads QEIIKDQVAN…TLGYVVINLG (279 aa). 2 consecutive C2 domains span residues 240-362 and 402-517; these read WPKT…LMTL and DPNA…NDKY. 4 residues coordinate Ca(2+): aspartate 276, aspartate 282, aspartate 332, and glutamate 334.

This sequence belongs to the synaptotagmin family. The cofactor is Ca(2+).

The protein resides in the golgi apparatus membrane. In terms of biological role, may play an important role in regulating an unconventional protein trafficking from the cytosol to the extracellular matrix. This Arabidopsis thaliana (Mouse-ear cress) protein is Synaptotagmin-2 (SYT2).